An 88-amino-acid polypeptide reads, in one-letter code: UPF0297 protein YrzL (88 aa).

This sequence belongs to the UPF0297 family.

The protein is UPF0297 protein YrzL (yrzL) of Bacillus subtilis (strain 168).